The sequence spans 369 residues: MQENLDKRLEALRTEISLAARSLFDLDKKQKELQVLEEESSEENFWQDSVHAGKISEQIVSLRRQIQEYQELKSKIDAIEFFLEDADALEDPAICEDLEKEFLFCEKKLAVWETQRLLSGEADKNSCFLTINAGAGGTESCDWVEMLFRMYSRWATKHQWALEVVDRLDGEVVGIKHVTVKFSGMYAYGYAKAERGVHRLVRISPFDSNGKRHTSFASVDVFPEIDDQIKIEIRPNDLRIDTFRSSGAGGQHVNVTESAVRITHLPSGVVVSCQNERSQIQNRESCMKMLQAKLYQQVLQERLEKQSLDRKDKKEIAWGSQIRNYVFQPYTLVKDVRTGHETGNVQAMLDGELLDEFIKAYLAEFGEVS.

Residue glutamine 251 is modified to N5-methylglutamine.

It belongs to the prokaryotic/mitochondrial release factor family. In terms of processing, methylated by PrmC. Methylation increases the termination efficiency of RF2.

The protein resides in the cytoplasm. Peptide chain release factor 2 directs the termination of translation in response to the peptide chain termination codons UGA and UAA. In Chlamydia pneumoniae (Chlamydophila pneumoniae), this protein is Peptide chain release factor 2 (prfB).